The chain runs to 543 residues: Excitatory amino acid transporter 1 (543 aa).

Over 1 to 47 (MTKSNGEEPRMGGRMERLQQGVRKRTLLAKKKVQSLTKEDVKSYLFR) the chain is Cytoplasmic. A helical membrane pass occupies residues 48 to 68 (NAFVLLTVTAVIVGTILGFAL). Topologically, residues 69–86 (RPYKMSYREVKYFSFPGE) are extracellular. A helical transmembrane segment spans residues 87–108 (LLMRMLQMLVLPLIISSLVTGM). At 109–122 (AALDSKASGKMGMR) the chain is on the cytoplasmic side. A helical membrane pass occupies residues 123–145 (AVVYYMTTTIIAVVIGIIIVIII). Residues 146–236 (HPGKGTKENM…IREEMVPVPG (91 aa)) are Extracellular-facing. N-linked (GlcNAc...) asparagine glycans are attached at residues Asn206 and Asn216. A helical transmembrane segment spans residues 237-260 (SVNGVNALGLVVFSMCFGFVIGNM). Residues 261–269 (KEQGQALRE) are Cytoplasmic-facing. Residues 270 to 297 (FFDSLNEAIMRLVAVIMWYAPLGILFLI) form a helical membrane-spanning segment. Residues 298 to 318 (AGKIVEMEDMGVIGGQLAMYT) are Extracellular-facing. The helical transmembrane segment at 319 to 340 (VTVIVGLLIHAVIVLPLLYFLV) threads the bilayer. Residues 341-345 (TRKNP) are Cytoplasmic-facing. An intramembrane region (discontinuously helical) is located at residues 346-376 (WVFIGGLLQALITALGTSSSSATLPITFKCL). Residue 363-365 (SSS) coordinates L-aspartate. Residues 377–385 (EENNGVDKR) are Cytoplasmic-facing. The chain crosses the membrane as a helical span at residues 386–412 (ITRFVLPVGATINMDGTALYEALAAIF). 3 residues coordinate Na(+): Gly394, Thr396, and Asn398. Position 402 (Thr402) interacts with L-aspartate. Over 413–425 (IAQVNNFDLNFGQ) the chain is Extracellular. An intramembrane region (discontinuously helical) is located at residues 426–459 (IITISITATAASIGAAGIPQAGLVTMVIVLTSVG). L-aspartate is bound at residue 443–447 (IPQAG). Residues 460 to 472 (LPTDDITLIIAVD) lie on the Extracellular side of the membrane. Residues 473-494 (WFLDRLRTTTNVLGDSLGAGIV) traverse the membrane as a helical segment. Residues Asp476 and Asn483 each contribute to the L-aspartate site. Na(+)-binding residues include Asn483 and Asp487. The Cytoplasmic portion of the chain corresponds to 495 to 543 (EHLSRHELKNRDVEMGNSVIEENEMKKPYQLIAQDNEPEKPVADSETKM). Ser512 is subject to Phosphoserine. The interval 522-543 (PYQLIAQDNEPEKPVADSETKM) is disordered. Basic and acidic residues predominate over residues 531–543 (EPEKPVADSETKM).

It belongs to the dicarboxylate/amino acid:cation symporter (DAACS) (TC 2.A.23) family. SLC1A3 subfamily. Homotrimer. Post-translationally, glycosylated. In terms of tissue distribution, detected in brain, in Bergmann glia arborising into the molecular layer of the cerebellum (at protein level). Localized in brain and is highly enriched in the Purkinje cell layer in cerebellum. Intermediate level in lung, low level in spleen, skeletal muscle and testis.

The protein resides in the cell membrane. It carries out the reaction K(+)(in) + L-glutamate(out) + 3 Na(+)(out) + H(+)(out) = K(+)(out) + L-glutamate(in) + 3 Na(+)(in) + H(+)(in). It catalyses the reaction K(+)(in) + L-aspartate(out) + 3 Na(+)(out) + H(+)(out) = K(+)(out) + L-aspartate(in) + 3 Na(+)(in) + H(+)(in). The catalysed reaction is D-aspartate(out) + K(+)(in) + 3 Na(+)(out) + H(+)(out) = D-aspartate(in) + K(+)(out) + 3 Na(+)(in) + H(+)(in). Its function is as follows. Sodium-dependent, high-affinity amino acid transporter that mediates the uptake of L-glutamate and also L-aspartate and D-aspartate. Functions as a symporter that transports one amino acid molecule together with two or three Na(+) ions and one proton, in parallel with the counter-transport of one K(+) ion. Plays a redundant role in the rapid removal of released glutamate from the synaptic cleft, which is essential for terminating the postsynaptic action of glutamate. This Mus musculus (Mouse) protein is Excitatory amino acid transporter 1 (Slc1a3).